The following is a 252-amino-acid chain: Cytochrome b6-f complex iron-sulfur subunit, chloroplastic (252 aa).

The chain crosses the membrane as a helical span at residues 94 to 114 (LVLAAVAPVVASAGGCYLYYF). Positions 141–235 (WFKSHKKNAR…VEDDNGKILL (95 aa)) constitute a Rieske domain. [2Fe-2S] cluster contacts are provided by cysteine 181, histidine 183, cysteine 199, and histidine 202. A disulfide bridge links cysteine 186 with cysteine 201.

The protein belongs to the Rieske iron-sulfur protein family. As to quaternary structure, the 4 large subunits of the cytochrome b6-f complex are cytochrome b6, subunit IV (17 kDa polypeptide, petD), cytochrome f and the Rieske protein, while the 4 small subunits are petG, petL, petM and petN. The complex functions as a dimer. Requires [2Fe-2S] cluster as cofactor.

It localises to the plastid. It is found in the chloroplast thylakoid membrane. It carries out the reaction 2 oxidized [plastocyanin] + a plastoquinol + 2 H(+)(in) = 2 reduced [plastocyanin] + a plastoquinone + 4 H(+)(out). Component of the cytochrome b6-f complex, which mediates electron transfer between photosystem II (PSII) and photosystem I (PSI), cyclic electron flow around PSI, and state transitions. In Bigelowiella natans (Pedinomonas minutissima), this protein is Cytochrome b6-f complex iron-sulfur subunit, chloroplastic (petC).